The primary structure comprises 461 residues: 23S rRNA (uracil(1939)-C(5))-methyltransferase RlmD (461 aa).

The interval 1–26 is disordered; sequence MAKHERGLRFQPTGGSKAPQIPTGKK. The 59-residue stretch at 20–78 folds into the TRAM domain; the sequence is QIPTGKKQRLSIERLANDGRGIAFFEGKTWFVLGALAGEEVEARVLGAHGKVVEARTER. The [4Fe-4S] cluster site is built by Cys91, Cys97, Cys100, and Cys179. Gln283, Phe312, Asn317, Glu333, Asp360, and Asp381 together coordinate S-adenosyl-L-methionine. Residue Cys407 is the Nucleophile of the active site.

This sequence belongs to the class I-like SAM-binding methyltransferase superfamily. RNA M5U methyltransferase family. RlmD subfamily.

The enzyme catalyses uridine(1939) in 23S rRNA + S-adenosyl-L-methionine = 5-methyluridine(1939) in 23S rRNA + S-adenosyl-L-homocysteine + H(+). Its function is as follows. Catalyzes the formation of 5-methyl-uridine at position 1939 (m5U1939) in 23S rRNA. In Pseudomonas fluorescens (strain Pf0-1), this protein is 23S rRNA (uracil(1939)-C(5))-methyltransferase RlmD.